Consider the following 350-residue polypeptide: DTSSLIVEDAPDHVRPYVIRHYSHARAVTVDTQLYRFYVTGPSSGYAFTLMGTNAPHSDALGVLPHIHQKHYENFYCNKGSFQLWAQSGNETQQTRVLSSGDYGSVPRNVTHTFQIQDPDTEMTGVIVPGGFEDLFYYLGTNATDTTHTPYIPSSSDSSSTTGPDSSTISTLQSFDVYAELSFTPRTDTVNGTAPANTVWHTGANALASTAGDPYFIANGWGPKYLNSQYGYQIVAPFVTATQAQDTNYTLSTISMSTTPSTVTVPTWSFPGACAFQVQEGRVVVQIGDYAATELGSGDVAFIPGGVEFKYYSEAYFSKVLFVSSGSDGLDQNLVNGGEEWSSVSFPADW.

The tract at residues 1–145 (DTSSLIVEDA…FYYLGTNATD (145 aa)) is cupin 1. Positions 66, 68, and 73 each coordinate Cu cation. His-66 provides a ligand contact to substrate. A substrate-binding site is contributed by Glu-73. N-linked (GlcNAc...) asparagine glycosylation is found at Asn-90 and Asn-109. His-112 contacts Cu cation. Residue Asn-142 is glycosylated (N-linked (GlcNAc...) asparagine). Residues 146–205 (TTHTPYIPSSSDSSSTTGPDSSTISTLQSFDVYAELSFTPRTDTVNGTAPANTVWHTGAN) form a linker region. The interval 148–167 (HTPYIPSSSDSSSTTGPDSS) is disordered. Residues 152–167 (IPSSSDSSSTTGPDSS) are compositionally biased toward low complexity. 2 N-linked (GlcNAc...) asparagine glycosylation sites follow: Asn-191 and Asn-248. The segment at 206–350 (ALASTAGDPY…WSSVSFPADW (145 aa)) is cupin 2.

Homodimer. The cofactor is Cu cation. In terms of processing, the N-linked glycan at Asn-191 consists of Man(5)-GlcNAc(2).

The catalysed reaction is quercetin + O2 = 2-(3,4-dihydroxybenzoyloxy)-4,6-dihydroxybenzoate + CO. Its pathway is flavonoid metabolism; quercetin degradation. With respect to regulation, inhibited by diethyldithiocarbamate and kojic acid. Its function is as follows. Performs the first step in the degradation of the flavonoid quercetin by a dioxygenase reaction. The enzyme catalyzes the cleavage of the O-heteroaromatic ring of the flavonol quercetin yielding the depside 2-protocatechuoyl-phloroglucinol carboxylic acid and carbon monoxide. This involves the remarkable dioxygenolytic cleavage of two carbon-carbon bonds. The protein is Quercetin 2,3-dioxygenase of Aspergillus japonicus.